Here is a 368-residue protein sequence, read N- to C-terminus: 3-dehydroquinate synthase (368 aa).

Residues 71–76 (DGEAFK), 105–109 (GVVGD), 129–130 (TT), Lys-142, Lys-151, and 169–172 (TLRT) contribute to the NAD(+) site. The Zn(2+) site is built by Glu-184, His-247, and His-264.

The protein belongs to the sugar phosphate cyclases superfamily. Dehydroquinate synthase family. The cofactor is Co(2+). It depends on Zn(2+) as a cofactor. NAD(+) serves as cofactor.

It localises to the cytoplasm. The enzyme catalyses 7-phospho-2-dehydro-3-deoxy-D-arabino-heptonate = 3-dehydroquinate + phosphate. It participates in metabolic intermediate biosynthesis; chorismate biosynthesis; chorismate from D-erythrose 4-phosphate and phosphoenolpyruvate: step 2/7. Its function is as follows. Catalyzes the conversion of 3-deoxy-D-arabino-heptulosonate 7-phosphate (DAHP) to dehydroquinate (DHQ). This is 3-dehydroquinate synthase from Cupriavidus pinatubonensis (strain JMP 134 / LMG 1197) (Cupriavidus necator (strain JMP 134)).